A 452-amino-acid chain; its full sequence is Bifunctional protein GlmU (452 aa).

The pyrophosphorylase stretch occupies residues methionine 1–lysine 225. Residues leucine 6 to glycine 9, lysine 20, glutamine 71, glycine 76 to threonine 77, tyrosine 98 to aspartate 100, glycine 135, glutamate 150, asparagine 165, and asparagine 223 contribute to the UDP-N-acetyl-alpha-D-glucosamine site. Aspartate 100 contributes to the Mg(2+) binding site. Asparagine 223 is a Mg(2+) binding site. A linker region spans residues proline 226–aspartate 246. An N-acetyltransferase region spans residues glycine 247 to arginine 452. UDP-N-acetyl-alpha-D-glucosamine contacts are provided by arginine 329 and lysine 347. Histidine 359 (proton acceptor) is an active-site residue. Tyrosine 362 and asparagine 373 together coordinate UDP-N-acetyl-alpha-D-glucosamine. Acetyl-CoA is bound by residues alanine 376, asparagine 382–tyrosine 383, serine 401, alanine 419, and arginine 436.

The protein in the N-terminal section; belongs to the N-acetylglucosamine-1-phosphate uridyltransferase family. It in the C-terminal section; belongs to the transferase hexapeptide repeat family. In terms of assembly, homotrimer. Mg(2+) is required as a cofactor.

The protein localises to the cytoplasm. It carries out the reaction alpha-D-glucosamine 1-phosphate + acetyl-CoA = N-acetyl-alpha-D-glucosamine 1-phosphate + CoA + H(+). The catalysed reaction is N-acetyl-alpha-D-glucosamine 1-phosphate + UTP + H(+) = UDP-N-acetyl-alpha-D-glucosamine + diphosphate. It functions in the pathway nucleotide-sugar biosynthesis; UDP-N-acetyl-alpha-D-glucosamine biosynthesis; N-acetyl-alpha-D-glucosamine 1-phosphate from alpha-D-glucosamine 6-phosphate (route II): step 2/2. Its pathway is nucleotide-sugar biosynthesis; UDP-N-acetyl-alpha-D-glucosamine biosynthesis; UDP-N-acetyl-alpha-D-glucosamine from N-acetyl-alpha-D-glucosamine 1-phosphate: step 1/1. It participates in bacterial outer membrane biogenesis; LPS lipid A biosynthesis. Catalyzes the last two sequential reactions in the de novo biosynthetic pathway for UDP-N-acetylglucosamine (UDP-GlcNAc). The C-terminal domain catalyzes the transfer of acetyl group from acetyl coenzyme A to glucosamine-1-phosphate (GlcN-1-P) to produce N-acetylglucosamine-1-phosphate (GlcNAc-1-P), which is converted into UDP-GlcNAc by the transfer of uridine 5-monophosphate (from uridine 5-triphosphate), a reaction catalyzed by the N-terminal domain. The protein is Bifunctional protein GlmU of Azoarcus sp. (strain BH72).